The following is a 104-amino-acid chain: N(4)-acetylcytidine amidohydrolase (104 aa).

The 89-residue stretch at 6-94 folds into the ASCH domain; that stretch reads ITFFQRFQND…IAEIYPNQTQ (89 aa). The active-site Proton acceptor is Lys21. The Nucleophile role is filled by Thr24. Glu74 functions as the Proton donor in the catalytic mechanism.

Belongs to the N(4)-acetylcytidine amidohydrolase family.

It carries out the reaction N(4)-acetylcytidine + H2O = cytidine + acetate + H(+). The enzyme catalyses N(4)-acetyl-2'-deoxycytidine + H2O = 2'-deoxycytidine + acetate + H(+). It catalyses the reaction N(4)-acetylcytosine + H2O = cytosine + acetate + H(+). Catalyzes the hydrolysis of N(4)-acetylcytidine (ac4C). The sequence is that of N(4)-acetylcytidine amidohydrolase (yqfB) from Salmonella agona (strain SL483).